A 450-amino-acid polypeptide reads, in one-letter code: Probable ECA polymerase (450 aa).

11 helical membrane-spanning segments follow: residues 6 to 26 (FSGLFVVWLLCTLFIATLTWF), 37 to 57 (VFFSLLFLLTFFFGFPLTSVL), 63 to 83 (VGVAPPEILLQALLSAGCFYA), 118 to 138 (VILMGIALVSVGIFFMHNGFL), 155 to 175 (GVALKRFFYFFIPAMLVVYFL), 181 to 201 (AWLFFLVSTVAFGLLTYMIVG), 207 to 227 (IIIAFAIFLFIGIIRGWISLW), 228 to 248 (MLAAAGVLGIVGMFWLALKRY), 341 to 361 (LVVMGGALFIPLGAIVVGLII), 378 to 398 (YKAAILHSFCFGAIFNMIVLA), and 410 to 430 (VFFIVVFGACLMIAKLLYWLF).

Belongs to the WzyE family. In terms of assembly, probably part of a complex composed of WzxE, WzyE and WzzE.

The protein resides in the cell inner membrane. It functions in the pathway bacterial outer membrane biogenesis; enterobacterial common antigen biosynthesis. Functionally, probably involved in the polymerization of enterobacterial common antigen (ECA) trisaccharide repeat units. The protein is Probable ECA polymerase of Escherichia coli O7:K1 (strain IAI39 / ExPEC).